A 74-amino-acid polypeptide reads, in one-letter code: Large ribosomal subunit protein bL31 (74 aa).

Belongs to the bacterial ribosomal protein bL31 family. Type A subfamily. Part of the 50S ribosomal subunit.

In terms of biological role, binds the 23S rRNA. This is Large ribosomal subunit protein bL31 from Phenylobacterium zucineum (strain HLK1).